Here is a 223-residue protein sequence, read N- to C-terminus: Deoxyribose-phosphate aldolase (223 aa).

Asp92 (proton donor/acceptor) is an active-site residue. Lys154 serves as the catalytic Schiff-base intermediate with acetaldehyde. Lys182 functions as the Proton donor/acceptor in the catalytic mechanism.

Belongs to the DeoC/FbaB aldolase family. DeoC type 1 subfamily.

It is found in the cytoplasm. It carries out the reaction 2-deoxy-D-ribose 5-phosphate = D-glyceraldehyde 3-phosphate + acetaldehyde. The protein operates within carbohydrate degradation; 2-deoxy-D-ribose 1-phosphate degradation; D-glyceraldehyde 3-phosphate and acetaldehyde from 2-deoxy-alpha-D-ribose 1-phosphate: step 2/2. Catalyzes a reversible aldol reaction between acetaldehyde and D-glyceraldehyde 3-phosphate to generate 2-deoxy-D-ribose 5-phosphate. This is Deoxyribose-phosphate aldolase from Pasteurella multocida (strain Pm70).